A 152-amino-acid chain; its full sequence is Protein-export protein SecB (152 aa).

The protein belongs to the SecB family. Homotetramer, a dimer of dimers. One homotetramer interacts with 1 SecA dimer.

It localises to the cytoplasm. One of the proteins required for the normal export of preproteins out of the cell cytoplasm. It is a molecular chaperone that binds to a subset of precursor proteins, maintaining them in a translocation-competent state. It also specifically binds to its receptor SecA. The protein is Protein-export protein SecB of Rickettsia rickettsii (strain Iowa).